The primary structure comprises 359 residues: Glycerol-3-phosphate dehydrogenase [NAD(P)+] (359 aa).

NADPH-binding residues include Thr11, Trp12, Arg32, and Lys107. Sn-glycerol 3-phosphate is bound by residues Lys107 and Gly138. Ala142 lines the NADPH pocket. 5 residues coordinate sn-glycerol 3-phosphate: Lys193, Asp246, Ser256, Arg257, and Asn258. Lys193 acts as the Proton acceptor in catalysis. Arg257 is an NADPH binding site. Residues Val281 and Glu283 each coordinate NADPH.

The protein belongs to the NAD-dependent glycerol-3-phosphate dehydrogenase family.

Its subcellular location is the cytoplasm. It catalyses the reaction sn-glycerol 3-phosphate + NAD(+) = dihydroxyacetone phosphate + NADH + H(+). The enzyme catalyses sn-glycerol 3-phosphate + NADP(+) = dihydroxyacetone phosphate + NADPH + H(+). The protein operates within membrane lipid metabolism; glycerophospholipid metabolism. Functionally, catalyzes the reduction of the glycolytic intermediate dihydroxyacetone phosphate (DHAP) to sn-glycerol 3-phosphate (G3P), the key precursor for phospholipid synthesis. The chain is Glycerol-3-phosphate dehydrogenase [NAD(P)+] from Dehalococcoides mccartyi (strain CBDB1).